A 638-amino-acid polypeptide reads, in one-letter code: MHLSEITHPNQLHGLTVRQLEEIARQIREKHLQTIAASGGHLGPGLGVVELTLALYQTLDLDRDKVVWDVGHQAYPHKLITGRYNEFHTLRQKDGVAGYLKRSENVFDHFGAGHASTSISAALGMALARDAKGEEFKCVAVIGDGALTGGMALEAINHAGHLPDTNLMVVLNDNEMSISPNVGAISRYLNKVRLSDPVQFLTDNLEEQVKHLPFLGDSLTPEMERLKDSMKRLAVSKVGAVIEELGFKYFGPVDGHNLEELIRTFKQAHKAKGPTLVHVATVKGKGYAIAEKDQVGYHAQKPFDLATGKAFPSKKPTPPSYSKVFAHALTTLAENNPKIVGITAAMATGTGLDKLQQRLPKQYIDVGIAEQHAVTLAAGLACEGMRPVVAIYSTFLQRAYDQIIHDVCIQKLPVFFCLDRAGIVGADGPTHQGMYDIAYLRLIPNIVLMAPKDEAELQRMLVTGIEYTDGAIAMRYPRGSGIGAPLMEDGWEPLPIGKGEILRNGDDILLIGYGAMVHSTLQVAEILSEHGISATVINARFVKPLDSELIAPLAKQIGKVATFEEGCLMGGFGSAVCEALQDHDVLVPVKRFGIGDVLVDHATPAESKAAHGLTPAQMAESIRAAFFQKDAAKTTTTV.

Residues H72 and 113 to 115 (GHA) each bind thiamine diphosphate. Residue D144 coordinates Mg(2+). Residues 145-146 (GA), N174, Y287, and E370 each bind thiamine diphosphate. N174 contributes to the Mg(2+) binding site.

Belongs to the transketolase family. DXPS subfamily. As to quaternary structure, homodimer. Requires Mg(2+) as cofactor. Thiamine diphosphate serves as cofactor.

It carries out the reaction D-glyceraldehyde 3-phosphate + pyruvate + H(+) = 1-deoxy-D-xylulose 5-phosphate + CO2. Its pathway is metabolic intermediate biosynthesis; 1-deoxy-D-xylulose 5-phosphate biosynthesis; 1-deoxy-D-xylulose 5-phosphate from D-glyceraldehyde 3-phosphate and pyruvate: step 1/1. Catalyzes the acyloin condensation reaction between C atoms 2 and 3 of pyruvate and glyceraldehyde 3-phosphate to yield 1-deoxy-D-xylulose-5-phosphate (DXP). The sequence is that of 1-deoxy-D-xylulose-5-phosphate synthase from Picosynechococcus sp. (strain ATCC 27264 / PCC 7002 / PR-6) (Agmenellum quadruplicatum).